Reading from the N-terminus, the 177-residue chain is Bifunctional protein PyrR (177 aa).

The short motif at 99–111 is the PRPP-binding element; sequence VVLVDDVLYTGRT.

Belongs to the purine/pyrimidine phosphoribosyltransferase family. PyrR subfamily. In terms of assembly, homodimer and homohexamer; in equilibrium.

The catalysed reaction is UMP + diphosphate = 5-phospho-alpha-D-ribose 1-diphosphate + uracil. Functionally, regulates transcriptional attenuation of the pyrimidine nucleotide (pyr) operon by binding in a uridine-dependent manner to specific sites on pyr mRNA. This disrupts an antiterminator hairpin in the RNA and favors formation of a downstream transcription terminator, leading to a reduced expression of downstream genes. In terms of biological role, also displays a weak uracil phosphoribosyltransferase activity which is not physiologically significant. The polypeptide is Bifunctional protein PyrR (Clostridioides difficile (strain 630) (Peptoclostridium difficile)).